We begin with the raw amino-acid sequence, 104 residues long: L-rhamnose mutarotase (104 aa).

Residue Tyr18 coordinates substrate. His22 serves as the catalytic Proton donor. Residues Tyr41 and 76–77 (WW) contribute to the substrate site.

It belongs to the rhamnose mutarotase family. In terms of assembly, homodimer.

It is found in the cytoplasm. It catalyses the reaction alpha-L-rhamnose = beta-L-rhamnose. It functions in the pathway carbohydrate metabolism; L-rhamnose metabolism. Its function is as follows. L-rhamnose mutarotase involved in ulvan degradation. Ulvan is the main polysaccharide component of the Ulvales (green seaweed) cell wall. It is composed of disaccharide building blocks comprising 3-sulfated rhamnose (Rha3S) linked to D-glucuronic acid (GlcA), L-iduronic acid (IduA), or D-xylose (Xyl). L-rhamnose mutarotase catalyzes the anomeric conversion of alpha- to beta-L-rhamnose. This is L-rhamnose mutarotase (rhaM) from Formosa agariphila (strain DSM 15362 / KCTC 12365 / LMG 23005 / KMM 3901 / M-2Alg 35-1).